A 410-amino-acid chain; its full sequence is Probable ATP-dependent RNA helicase MG308 (410 aa).

A Helicase ATP-binding domain is found at 26-179 (VFKLWPFQNI…KKQVINTKVI (154 aa)). 39–46 (AETGSGKT) contacts ATP. The short motif at 126–129 (DEID) is the DEID box element. Positions 190 to 357 (LVKHFVVHLN…DLKFLTENNQ (168 aa)) constitute a Helicase C-terminal domain.

Belongs to the DEAD box helicase family.

It catalyses the reaction ATP + H2O = ADP + phosphate + H(+). This is Probable ATP-dependent RNA helicase MG308 from Mycoplasma genitalium (strain ATCC 33530 / DSM 19775 / NCTC 10195 / G37) (Mycoplasmoides genitalium).